Here is a 336-residue protein sequence, read N- to C-terminus: Casein kinase II subunit alpha (336 aa).

One can recognise a Protein kinase domain in the interval Y32–F317. Residues I38 to V46 and K61 each bind ATP. The Proton acceptor role is filled by D149.

This sequence belongs to the protein kinase superfamily. Ser/Thr protein kinase family. CK2 subfamily. Tetramer composed of two alpha chains, one beta chain and one beta' chain.

The enzyme catalyses L-seryl-[protein] + ATP = O-phospho-L-seryl-[protein] + ADP + H(+). It catalyses the reaction L-threonyl-[protein] + ATP = O-phospho-L-threonyl-[protein] + ADP + H(+). Catalytic subunit of a constitutively active serine/threonine-protein kinase complex that phosphorylates a large number of substrates containing acidic residues C-terminal to the phosphorylated serine or threonine. Phosphorylates the frq clock protein thus regulating the circadian clock. This chain is Casein kinase II subunit alpha (cka), found in Neurospora crassa (strain ATCC 24698 / 74-OR23-1A / CBS 708.71 / DSM 1257 / FGSC 987).